A 165-amino-acid polypeptide reads, in one-letter code: Large ribosomal subunit protein uL10 (165 aa).

Belongs to the universal ribosomal protein uL10 family. As to quaternary structure, part of the ribosomal stalk of the 50S ribosomal subunit. The N-terminus interacts with L11 and the large rRNA to form the base of the stalk. The C-terminus forms an elongated spine to which L12 dimers bind in a sequential fashion forming a multimeric L10(L12)X complex.

Its function is as follows. Forms part of the ribosomal stalk, playing a central role in the interaction of the ribosome with GTP-bound translation factors. In Borrelia turicatae (strain 91E135), this protein is Large ribosomal subunit protein uL10.